A 395-amino-acid polypeptide reads, in one-letter code: Elongation factor Ts, mitochondrial (395 aa).

A mitochondrion-targeting transit peptide spans Met1 to Phe63.

This sequence belongs to the EF-Ts family.

It is found in the mitochondrion. Functionally, associates with the EF-Tu.GDP complex and induces the exchange of GDP to GTP. It remains bound to the aminoacyl-tRNA.EF-Tu.GTP complex up to the GTP hydrolysis stage on the ribosome. The sequence is that of Elongation factor Ts, mitochondrial from Arabidopsis thaliana (Mouse-ear cress).